The chain runs to 202 residues: N-(5'-phosphoribosyl)anthranilate isomerase (202 aa).

It belongs to the TrpF family.

The enzyme catalyses N-(5-phospho-beta-D-ribosyl)anthranilate = 1-(2-carboxyphenylamino)-1-deoxy-D-ribulose 5-phosphate. It functions in the pathway amino-acid biosynthesis; L-tryptophan biosynthesis; L-tryptophan from chorismate: step 3/5. This is N-(5'-phosphoribosyl)anthranilate isomerase from Listeria monocytogenes serotype 4b (strain F2365).